Here is a 741-residue protein sequence, read N- to C-terminus: Mitofusin-1 (741 aa).

Over 1-584 (MAEPVSPLKH…ASQEELMITL (584 aa)) the chain is Cytoplasmic. Positions 9-73 (KHFVLAKKAI…LSIIGEVLSR (65 aa)) are part of a helix bundle domain, formed by helices from N-terminal and C-terminal regions. In terms of domain architecture, Dynamin-type G spans 72–321 (SRRHMKVAFF…ARLQEFQNFE (250 aa)). Positions 82-89 (GRTSSGKS) are G1 motif. A GTP-binding site is contributed by 85–90 (SSGKSS). The interval 108–109 (IT) is G2 motif. Residues 178–181 (DSPG) are G3 motif. Residue 237–240 (NRWD) participates in GTP binding. Residues 237–240 (NRWD) form a G4 motif region. Residue E266 is a region of interest, G5 motif. GTP-binding residues include S284 and K286. Positions 338 to 364 (EQHTIRAKQILATVKNIMDSVNLAAED) are part of a helix bundle domain, formed by helices from N-terminal and C-terminal regions. A coiled-coil region spans residues 371-408 (EEREDQIDRLDFIRNQMNLLTLDVKKKIKEVTEEVANK). A helical transmembrane segment spans residues 585–605 (VTGLASVTSRTSMGIIIVGGV). Residues 606–608 (IWK) are Mitochondrial intermembrane-facing. Residues 609–629 (TIGWKLLSVSLTMYGALYLYE) form a helical membrane-spanning segment. At 630–741 (RLSWTTHAKE…QFLPSSNEES (112 aa)) the chain is on the cytoplasmic side. Residues 679-734 (RLCQQVDITQKQLEEEIARLPKEIDQLEKIQNNSKLLRNKAVQLENELENFTKQFL) adopt a coiled-coil conformation. A part of a helix bundle domain, formed by helices from N-terminal and C-terminal regions region spans residues 703-734 (DQLEKIQNNSKLLRNKAVQLENELENFTKQFL).

This sequence belongs to the TRAFAC class dynamin-like GTPase superfamily. Dynamin/Fzo/YdjA family. Mitofusin subfamily. In terms of assembly, homodimer, also in the absence of bound GTP. Forms higher oligomers in the presence of a transition state GTP analog. Forms homomultimers and heteromultimers with MFN2. Oligomerization is essential for mitochondrion fusion. Component of a high molecular weight multiprotein complex. Interacts with VAT1. Interacts with THG1L; THG1L probably functions as a guanyl-nucleotide exchange factor/GEF, activating MFN1. In terms of processing, ubiquitinated by non-degradative ubiquitin by PRKN. Deubiquitination by USP30 inhibits mitochondrial fusion. Ubiquitinated by MARCHF5. When mitochondria are depolarized and dysfunctional, it is ubiquitinated by a SCF (SKP1-CUL1-F-box protein) E3 ubiquitin-protein ligase complex that contains FBXO7 and PRKN. Detected in kidney and heart (at protein level). Ubiquitous. Expressed at slightly higher level in kidney and heart. Isoform 2 may be overexpressed in some tumors, such as lung cancers.

It localises to the mitochondrion outer membrane. The protein resides in the cytoplasm. It catalyses the reaction GTP + H2O = GDP + phosphate + H(+). Mitochondrial outer membrane GTPase that mediates mitochondrial clustering and fusion. Membrane clustering requires GTPase activity. It may involve a major rearrangement of the coiled coil domains. Mitochondria are highly dynamic organelles, and their morphology is determined by the equilibrium between mitochondrial fusion and fission events. Overexpression induces the formation of mitochondrial networks (in vitro). Has low GTPase activity. The polypeptide is Mitofusin-1 (MFN1) (Homo sapiens (Human)).